Reading from the N-terminus, the 260-residue chain is Phosphatidylglycerol--prolipoprotein diacylglyceryl transferase (260 aa).

A run of 4 helical transmembrane segments spans residues 17–37, 52–72, 85–105, and 113–133; these read VVKW…SWIF, LTAA…LHVI, IFSG…IGLW, and FNLG…QAIG. Residue R134 coordinates a 1,2-diacyl-sn-glycero-3-phospho-(1'-sn-glycerol). 3 consecutive transmembrane segments (helical) span residues 170 to 190, 198 to 218, and 227 to 247; these read APTQ…SLFI, GQLF…IGFV, and GLEQ…PLFI.

The protein belongs to the Lgt family.

Its subcellular location is the cell membrane. The catalysed reaction is L-cysteinyl-[prolipoprotein] + a 1,2-diacyl-sn-glycero-3-phospho-(1'-sn-glycerol) = an S-1,2-diacyl-sn-glyceryl-L-cysteinyl-[prolipoprotein] + sn-glycerol 1-phosphate + H(+). Its pathway is protein modification; lipoprotein biosynthesis (diacylglyceryl transfer). Catalyzes the transfer of the diacylglyceryl group from phosphatidylglycerol to the sulfhydryl group of the N-terminal cysteine of a prolipoprotein, the first step in the formation of mature lipoproteins. The sequence is that of Phosphatidylglycerol--prolipoprotein diacylglyceryl transferase from Dehalococcoides mccartyi (strain ATCC BAA-2100 / JCM 16839 / KCTC 5957 / BAV1).